We begin with the raw amino-acid sequence, 507 residues long: Archaeal-type glutamate synthase [NADPH] (507 aa).

4Fe-4S ferredoxin-type domains follow at residues 10–39 and 41–70; these read FVVE…YDEN and NRVY…VRKN. Positions 19, 22, 25, 29, 50, 53, 56, and 60 each coordinate [4Fe-4S] cluster.

The protein belongs to the glutamate synthase family. Requires FMN as cofactor.

The catalysed reaction is 2 L-glutamate + NADP(+) = L-glutamine + 2-oxoglutarate + NADPH + H(+). The polypeptide is Archaeal-type glutamate synthase [NADPH] (Thermotoga maritima (strain ATCC 43589 / DSM 3109 / JCM 10099 / NBRC 100826 / MSB8)).